Consider the following 466-residue polypeptide: Asparagine--tRNA ligase (466 aa).

Belongs to the class-II aminoacyl-tRNA synthetase family. As to quaternary structure, homodimer.

It localises to the cytoplasm. The catalysed reaction is tRNA(Asn) + L-asparagine + ATP = L-asparaginyl-tRNA(Asn) + AMP + diphosphate + H(+). This is Asparagine--tRNA ligase from Buchnera aphidicola subsp. Schizaphis graminum (strain Sg).